Reading from the N-terminus, the 321-residue chain is Olfactory receptor 51G1 (321 aa).

Residues 1–27 (MTILLNSSLQRATFFLTGFQGLEGLHG) lie on the Extracellular side of the membrane. N-linked (GlcNAc...) asparagine glycosylation occurs at N6. A helical transmembrane segment spans residues 28-48 (WISIPFCFIYLTVILGNLTIL). The Cytoplasmic segment spans residues 49 to 56 (HVICTDAT). A helical membrane pass occupies residues 57–77 (LHGPMYYFLGMLAVTDLGLCL). The Extracellular segment spans residues 78–101 (STLPTVLGIFWFDTREIGIPACFT). A disulfide bridge connects residues C99 and C191. The helical transmembrane segment at 102–122 (QLFFIHTLSSMESSVLLSMSI) threads the bilayer. Topologically, residues 123 to 141 (DRYVAVCNPLHDSTVLTPA) are cytoplasmic. A helical transmembrane segment spans residues 142-162 (CIVKMGLSSVLRSALLILPLP). Topologically, residues 163-198 (FLLKRFQYCHSHVLAHAYCLHLEIMKLACSSIIVNH) are extracellular. A helical transmembrane segment spans residues 199–219 (IYGLFVVACTVGVDSLLIFLS). Residues 220–239 (YALILRTVLSIASHQERLRA) lie on the Cytoplasmic side of the membrane. A helical transmembrane segment spans residues 240–260 (LNTCVSHICAVLLFYIPMIGL). Residues 261 to 275 (SLVHRFGEHLPRVVH) are Extracellular-facing. A helical membrane pass occupies residues 276 to 296 (LFMSYVYLLVPPLMNPIIYSI). The Cytoplasmic segment spans residues 297–321 (KTKQIRQRIIKKFQFIKSLRCFWKD).

It belongs to the G-protein coupled receptor 1 family.

Its subcellular location is the cell membrane. Its function is as follows. Odorant receptor. This chain is Olfactory receptor 51G1 (OR51G1), found in Homo sapiens (Human).